Reading from the N-terminus, the 183-residue chain is Holliday junction branch migration complex subunit RuvA (183 aa).

The interval 1 to 64 (MVVGIEGIIT…EDSNKFYGFL (64 aa)) is domain I. The domain II stretch occupies residues 65-139 (DKDEQKMFEM…DTRTKLENVS (75 aa)). A region of interest (flexible linker) is located at residue Ser-139. The tract at residues 139 to 183 (SDDKSEALAALLTLGFKQEKIISVLASAQATGTSELIKEALKKLR) is domain III.

It belongs to the RuvA family. As to quaternary structure, homotetramer. Forms an RuvA(8)-RuvB(12)-Holliday junction (HJ) complex. HJ DNA is sandwiched between 2 RuvA tetramers; dsDNA enters through RuvA and exits via RuvB. An RuvB hexamer assembles on each DNA strand where it exits the tetramer. Each RuvB hexamer is contacted by two RuvA subunits (via domain III) on 2 adjacent RuvB subunits; this complex drives branch migration. In the full resolvosome a probable DNA-RuvA(4)-RuvB(12)-RuvC(2) complex forms which resolves the HJ.

The protein resides in the cytoplasm. In terms of biological role, the RuvA-RuvB-RuvC complex processes Holliday junction (HJ) DNA during genetic recombination and DNA repair, while the RuvA-RuvB complex plays an important role in the rescue of blocked DNA replication forks via replication fork reversal (RFR). RuvA specifically binds to HJ cruciform DNA, conferring on it an open structure. The RuvB hexamer acts as an ATP-dependent pump, pulling dsDNA into and through the RuvAB complex. HJ branch migration allows RuvC to scan DNA until it finds its consensus sequence, where it cleaves and resolves the cruciform DNA. The polypeptide is Holliday junction branch migration complex subunit RuvA (Campylobacter jejuni subsp. doylei (strain ATCC BAA-1458 / RM4099 / 269.97)).